The chain runs to 341 residues: D-aspartate oxidase (341 aa).

FAD contacts are provided by Asp36, Arg37, Thr43, Ser44, Met50, Gly307, Ile311, and Ser312. Positions Ser339 to Leu341 match the Microbody targeting signal motif.

This sequence belongs to the DAMOX/DASOX family. Tetramer. Interacts with PEX5; the interaction is direct and required for localization of DDO to the peroxisome. FAD is required as a cofactor. As to expression, expressed in liver and kidney (at protein level). In the brain, expressed in the frontal, temporal, and occipital lobes of the cortex, hippocampus, striatum, diencephalon, brainstem, cerebellum, spinal cord, plexus choroiderus and ependyma (at protein level). Also expressed in the lung, muscle, heart, spleen, small intestine and testis (at protein level).

It localises to the peroxisome matrix. The protein resides in the cytoplasm. Its subcellular location is the cytosol. It catalyses the reaction D-aspartate + O2 + H2O = oxaloacetate + H2O2 + NH4(+). The catalysed reaction is D-glutamate + O2 + H2O = H2O2 + 2-oxoglutarate + NH4(+). Its activity is regulated as follows. Inhibited by aminooxyacetic acid, malonate, meso-tartrate and potassium bromide. Functionally, selectively catalyzes the oxidative deamination of acidic amino acids. Suppresses the level of D-aspartate in the brain, an amino acid that can act as an agonist for glutamate receptors. Protects the organism from the toxicity of D-amino acids. May also function in the intestine. The sequence is that of D-aspartate oxidase from Rattus norvegicus (Rat).